A 318-amino-acid polypeptide reads, in one-letter code: Aspartate carbamoyltransferase catalytic subunit (318 aa).

Positions 64 and 65 each coordinate carbamoyl phosphate. Residue K92 coordinates L-aspartate. Carbamoyl phosphate-binding residues include R114, H142, and Q145. Residues R176 and R230 each coordinate L-aspartate. Carbamoyl phosphate contacts are provided by G271 and P272.

This sequence belongs to the aspartate/ornithine carbamoyltransferase superfamily. ATCase family. In terms of assembly, heterododecamer (2C3:3R2) of six catalytic PyrB chains organized as two trimers (C3), and six regulatory PyrI chains organized as three dimers (R2).

The enzyme catalyses carbamoyl phosphate + L-aspartate = N-carbamoyl-L-aspartate + phosphate + H(+). It functions in the pathway pyrimidine metabolism; UMP biosynthesis via de novo pathway; (S)-dihydroorotate from bicarbonate: step 2/3. Catalyzes the condensation of carbamoyl phosphate and aspartate to form carbamoyl aspartate and inorganic phosphate, the committed step in the de novo pyrimidine nucleotide biosynthesis pathway. This is Aspartate carbamoyltransferase catalytic subunit from Desulfovibrio desulfuricans (strain ATCC 27774 / DSM 6949 / MB).